The chain runs to 180 residues: ATP synthase subunit b (180 aa).

A helical transmembrane segment spans residues 26-46; that stretch reads IPLMLATLAALVISIFFLTYF.

Belongs to the ATPase B chain family. As to quaternary structure, F-type ATPases have 2 components, F(1) - the catalytic core - and F(0) - the membrane proton channel. F(1) has five subunits: alpha(3), beta(3), gamma(1), delta(1), epsilon(1). F(0) has three main subunits: a(1), b(2) and c(10-14). The alpha and beta chains form an alternating ring which encloses part of the gamma chain. F(1) is attached to F(0) by a central stalk formed by the gamma and epsilon chains, while a peripheral stalk is formed by the delta and b chains.

The protein resides in the cell membrane. In terms of biological role, f(1)F(0) ATP synthase produces ATP from ADP in the presence of a proton or sodium gradient. F-type ATPases consist of two structural domains, F(1) containing the extramembraneous catalytic core and F(0) containing the membrane proton channel, linked together by a central stalk and a peripheral stalk. During catalysis, ATP synthesis in the catalytic domain of F(1) is coupled via a rotary mechanism of the central stalk subunits to proton translocation. Its function is as follows. Component of the F(0) channel, it forms part of the peripheral stalk, linking F(1) to F(0). The polypeptide is ATP synthase subunit b (Mycoplasmopsis pulmonis (strain UAB CTIP) (Mycoplasma pulmonis)).